The chain runs to 1033 residues: Isoleucine--tRNA ligase 2 (1033 aa).

Residues 47 to 57 carry the 'HIGH' region motif; the sequence is PTANGLPHVGH. The 'KMSKS' region motif lies at 590 to 594; it reads KMSKS. Position 593 (Lys593) interacts with ATP.

This sequence belongs to the class-I aminoacyl-tRNA synthetase family. IleS type 2 subfamily. In terms of assembly, monomer. Zn(2+) serves as cofactor.

It localises to the cytoplasm. The catalysed reaction is tRNA(Ile) + L-isoleucine + ATP = L-isoleucyl-tRNA(Ile) + AMP + diphosphate. Functionally, catalyzes the attachment of isoleucine to tRNA(Ile). As IleRS can inadvertently accommodate and process structurally similar amino acids such as valine, to avoid such errors it has two additional distinct tRNA(Ile)-dependent editing activities. One activity is designated as 'pretransfer' editing and involves the hydrolysis of activated Val-AMP. The other activity is designated 'posttransfer' editing and involves deacylation of mischarged Val-tRNA(Ile). The sequence is that of Isoleucine--tRNA ligase 2 from Bacillus cereus (strain ZK / E33L).